A 214-amino-acid polypeptide reads, in one-letter code: Protein-L-isoaspartate O-methyltransferase (214 aa).

Residue Ser63 is part of the active site.

Belongs to the methyltransferase superfamily. L-isoaspartyl/D-aspartyl protein methyltransferase family.

The protein localises to the cytoplasm. The enzyme catalyses [protein]-L-isoaspartate + S-adenosyl-L-methionine = [protein]-L-isoaspartate alpha-methyl ester + S-adenosyl-L-homocysteine. Catalyzes the methyl esterification of L-isoaspartyl residues in peptides and proteins that result from spontaneous decomposition of normal L-aspartyl and L-asparaginyl residues. It plays a role in the repair and/or degradation of damaged proteins. In Maridesulfovibrio salexigens (strain ATCC 14822 / DSM 2638 / NCIMB 8403 / VKM B-1763) (Desulfovibrio salexigens), this protein is Protein-L-isoaspartate O-methyltransferase.